The following is a 176-amino-acid chain: MSRVGKSPIALQGAEVKLADGAITVKGPLGTITQAVNPLVNVANNDGTLNLSPVDDSREANALSGTMRAIIANAVHGVTKGFERKLTLVGVGYRAQAQGDKLNLSLGFSHPVVHQMPEGIKAETPTQTEIVIKGIDKQKVGQVAAEVRGYRPPEPYKGKGVRYADEVVILKETKKK.

The protein belongs to the universal ribosomal protein uL6 family. In terms of assembly, part of the 50S ribosomal subunit.

Its function is as follows. This protein binds to the 23S rRNA, and is important in its secondary structure. It is located near the subunit interface in the base of the L7/L12 stalk, and near the tRNA binding site of the peptidyltransferase center. The polypeptide is Large ribosomal subunit protein uL6 (Burkholderia mallei (strain NCTC 10247)).